The primary structure comprises 316 residues: Aprataxin (316 aa).

The FHA-like domain occupies histidine 1–valine 38. Residues lysine 104–serine 142 form a disordered region. Positions aspartate 110–glycine 130 are enriched in polar residues. The region spanning serine 142 to leucine 247 is the HIT domain. Interaction with DNA substrate stretches follow at residues aspartate 167 to lysine 171 and serine 229 to methionine 230. A Histidine triad motif motif is present at residues glutamine 232–histidine 236. Histidine 234 serves as the catalytic Tele-AMP-histidine intermediate. The C2H2-type zinc finger occupies leucine 291–histidine 313.

Its subcellular location is the nucleus. The protein resides in the nucleoplasm. It localises to the nucleolus. It carries out the reaction a 5'-end adenosine-5'-diphospho-5'-2'-deoxyribonucleoside-DNA + H2O = a 5'-end 5'-phospho-2'-deoxyribonucleoside-DNA + AMP + 2 H(+). The catalysed reaction is a 5'-end adenosine-5'-diphospho-5'-ribonucleoside-2'-deoxyribonucleotide-DNA + H2O = a 5'-end 5'-phospho-ribonucleoside-2'-deoxyribonucleotide-DNA + AMP + 2 H(+). It catalyses the reaction a 3'-end 2'-deoxyribonucleotide-3'-diphospho-5'-guanosine-DNA + H2O = a 3'-end 2'-deoxyribonucleotide 3'-phosphate-DNA + GMP + 2 H(+). Functionally, DNA-binding protein involved in single-strand DNA break repair, double-strand DNA break repair and base excision repair. Resolves abortive DNA ligation intermediates formed either at base excision sites, or when DNA ligases attempt to repair non-ligatable breaks induced by reactive oxygen species. Catalyzes the release of adenylate groups covalently linked to 5'-phosphate termini, resulting in the production of 5'-phosphate termini that can be efficiently rejoined. Also able to hydrolyze adenosine 5'-monophosphoramidate (AMP-NH(2)) and diadenosine tetraphosphate (AppppA), but with lower catalytic activity. Likewise, catalyzes the release of 3'-linked guanosine (DNAppG) and inosine (DNAppI) from DNA, but has higher specific activity with 5'-linked adenosine (AppDNA). In Gallus gallus (Chicken), this protein is Aprataxin (APTX).